The primary structure comprises 404 residues: Pyrophosphate--fructose 6-phosphate 1-phosphotransferase (404 aa).

Residue glycine 13 participates in diphosphate binding. A Mg(2+)-binding site is contributed by asparagine 108. Residues threonine 136–aspartate 138, methionine 180–arginine 182, glutamate 237, and tyrosine 295–arginine 298 contribute to the substrate site. The active-site Proton acceptor is the aspartate 138.

Belongs to the phosphofructokinase type A (PFKA) family. PPi-dependent PFK group II subfamily. Clade 'B2' sub-subfamily. As to quaternary structure, homodimer. The cofactor is Mg(2+).

It is found in the cytoplasm. The catalysed reaction is beta-D-fructose 6-phosphate + diphosphate = beta-D-fructose 1,6-bisphosphate + phosphate + H(+). The protein operates within carbohydrate degradation; glycolysis; D-glyceraldehyde 3-phosphate and glycerone phosphate from D-glucose: step 3/4. Non-allosteric. Its function is as follows. Catalyzes the phosphorylation of D-fructose 6-phosphate, the first committing step of glycolysis. Uses inorganic phosphate (PPi) as phosphoryl donor instead of ATP like common ATP-dependent phosphofructokinases (ATP-PFKs), which renders the reaction reversible, and can thus function both in glycolysis and gluconeogenesis. Consistently, PPi-PFK can replace the enzymes of both the forward (ATP-PFK) and reverse (fructose-bisphosphatase (FBPase)) reactions. The protein is Pyrophosphate--fructose 6-phosphate 1-phosphotransferase of Rhodospirillum rubrum (strain ATCC 11170 / ATH 1.1.1 / DSM 467 / LMG 4362 / NCIMB 8255 / S1).